The chain runs to 305 residues: Elongation factor Ts (305 aa).

Residues 79–82 (TDFV) form an involved in Mg(2+) ion dislocation from EF-Tu region.

Belongs to the EF-Ts family.

Its subcellular location is the cytoplasm. Its function is as follows. Associates with the EF-Tu.GDP complex and induces the exchange of GDP to GTP. It remains bound to the aminoacyl-tRNA.EF-Tu.GTP complex up to the GTP hydrolysis stage on the ribosome. The protein is Elongation factor Ts of Brucella suis biovar 1 (strain 1330).